The chain runs to 67 residues: Small ribosomal subunit protein bS21 (67 aa).

Belongs to the bacterial ribosomal protein bS21 family.

In Nitratidesulfovibrio vulgaris (strain DP4) (Desulfovibrio vulgaris), this protein is Small ribosomal subunit protein bS21.